The sequence spans 322 residues: Lipoyl synthase (322 aa).

[4Fe-4S] cluster-binding residues include cysteine 69, cysteine 74, cysteine 80, cysteine 95, cysteine 99, cysteine 102, and serine 309. The 218-residue stretch at 81–298 (FNHGTATFMI…GVKAKALGFD (218 aa)) folds into the Radical SAM core domain.

The protein belongs to the radical SAM superfamily. Lipoyl synthase family. [4Fe-4S] cluster is required as a cofactor.

It is found in the cytoplasm. It catalyses the reaction [[Fe-S] cluster scaffold protein carrying a second [4Fe-4S](2+) cluster] + N(6)-octanoyl-L-lysyl-[protein] + 2 oxidized [2Fe-2S]-[ferredoxin] + 2 S-adenosyl-L-methionine + 4 H(+) = [[Fe-S] cluster scaffold protein] + N(6)-[(R)-dihydrolipoyl]-L-lysyl-[protein] + 4 Fe(3+) + 2 hydrogen sulfide + 2 5'-deoxyadenosine + 2 L-methionine + 2 reduced [2Fe-2S]-[ferredoxin]. It functions in the pathway protein modification; protein lipoylation via endogenous pathway; protein N(6)-(lipoyl)lysine from octanoyl-[acyl-carrier-protein]: step 2/2. In terms of biological role, catalyzes the radical-mediated insertion of two sulfur atoms into the C-6 and C-8 positions of the octanoyl moiety bound to the lipoyl domains of lipoate-dependent enzymes, thereby converting the octanoylated domains into lipoylated derivatives. The sequence is that of Lipoyl synthase from Psychromonas ingrahamii (strain DSM 17664 / CCUG 51855 / 37).